The primary structure comprises 371 residues: Putative glutamate--cysteine ligase 2 (371 aa).

It belongs to the glutamate--cysteine ligase type 2 family. YbdK subfamily.

The enzyme catalyses L-cysteine + L-glutamate + ATP = gamma-L-glutamyl-L-cysteine + ADP + phosphate + H(+). Functionally, ATP-dependent carboxylate-amine ligase which exhibits weak glutamate--cysteine ligase activity. This Burkholderia ambifaria (strain MC40-6) protein is Putative glutamate--cysteine ligase 2.